The following is a 266-amino-acid chain: MVLNWRGVKSRLYSGKRRIDGRNKGLIAIRARGGALKRKYRYIEHYKQKWMDKWLFVMRIEYDPNRSAHIALCSILKEGIYFYVISVAKLEVGSLIITSNLKQGILQVGYTTKIKNIPEGILINNIELMENSGSKLSRAAGTSSLIIKQYNKKYSLVKLSSKECRLISNECYATIGTVSNIEKKIKKSKKASESRKKGIRPIVRGLAMNPVDHPHGGRTKGGMHWKSFSGKLAYNISSRKKTKMSSRYIIIGHRKQRLMDKKKKNG.

This sequence belongs to the universal ribosomal protein uL2 family.

It localises to the mitochondrion. The sequence is that of Large ribosomal subunit protein uL2m (mrpl2) from Dictyostelium citrinum (Slime mold).